Here is a 186-residue protein sequence, read N- to C-terminus: Peptidyl-tRNA hydrolase (186 aa).

Tyr14 lines the tRNA pocket. His19 functions as the Proton acceptor in the catalytic mechanism. The tRNA site is built by Tyr64, Asn66, and Asn112.

The protein belongs to the PTH family. In terms of assembly, monomer.

It localises to the cytoplasm. It carries out the reaction an N-acyl-L-alpha-aminoacyl-tRNA + H2O = an N-acyl-L-amino acid + a tRNA + H(+). Functionally, hydrolyzes ribosome-free peptidyl-tRNAs (with 1 or more amino acids incorporated), which drop off the ribosome during protein synthesis, or as a result of ribosome stalling. Its function is as follows. Catalyzes the release of premature peptidyl moieties from peptidyl-tRNA molecules trapped in stalled 50S ribosomal subunits, and thus maintains levels of free tRNAs and 50S ribosomes. The polypeptide is Peptidyl-tRNA hydrolase (Bacillus cereus (strain ATCC 14579 / DSM 31 / CCUG 7414 / JCM 2152 / NBRC 15305 / NCIMB 9373 / NCTC 2599 / NRRL B-3711)).